The sequence spans 160 residues: Transmembrane protein 191A (160 aa).

Residues 24–44 (FCFPLDFVSNLFWIFASKFII) form a helical membrane-spanning segment.

It belongs to the TMEM191 family.

The protein resides in the membrane. The protein is Transmembrane protein 191A (TMEM191A) of Homo sapiens (Human).